The sequence spans 89 residues: Cell division protein FtsB (89 aa).

At 1–3 (MRP) the chain is on the cytoplasmic side. A helical membrane pass occupies residues 4 to 21 (IIAILIALFILLQYQLWF). Residues 22-89 (AAGGIVSVHH…KNEVFYQIVK (68 aa)) lie on the Periplasmic side of the membrane. The stretch at 29–62 (VHHLNENINHQIMENQKLKDRNTALLADIDDLKH) forms a coiled coil.

It belongs to the FtsB family. As to quaternary structure, part of a complex composed of FtsB, FtsL and FtsQ.

It is found in the cell inner membrane. In terms of biological role, essential cell division protein. May link together the upstream cell division proteins, which are predominantly cytoplasmic, with the downstream cell division proteins, which are predominantly periplasmic. The chain is Cell division protein FtsB from Coxiella burnetii (strain RSA 493 / Nine Mile phase I).